The primary structure comprises 382 residues: Histidinol-phosphate aminotransferase (382 aa).

Lys215 carries the post-translational modification N6-(pyridoxal phosphate)lysine. A disordered region spans residues 363 to 382 (NIDNQSKTHSQTSSIRKGTI).

It belongs to the class-II pyridoxal-phosphate-dependent aminotransferase family. Histidinol-phosphate aminotransferase subfamily. In terms of assembly, homodimer. Requires pyridoxal 5'-phosphate as cofactor.

It catalyses the reaction L-histidinol phosphate + 2-oxoglutarate = 3-(imidazol-4-yl)-2-oxopropyl phosphate + L-glutamate. The protein operates within amino-acid biosynthesis; L-histidine biosynthesis; L-histidine from 5-phospho-alpha-D-ribose 1-diphosphate: step 7/9. In Yersinia pseudotuberculosis serotype O:1b (strain IP 31758), this protein is Histidinol-phosphate aminotransferase.